A 531-amino-acid chain; its full sequence is Transcription termination/antitermination protein NusA (531 aa).

Residues Gly165–Ser235 form the S1 motif domain. The KH domain occupies Asp340–Ile410. A compositionally biased stretch (basic and acidic residues) spans Glu463–Gln475. A disordered region spans residues Glu463–Leu531. A compositionally biased stretch (basic residues) spans Pro476–Ala490. Basic and acidic residues predominate over residues Ala502 to Val512. Residues Asp513–Leu531 are compositionally biased toward polar residues.

It belongs to the NusA family. Monomer. Binds directly to the core enzyme of the DNA-dependent RNA polymerase and to nascent RNA.

It is found in the cytoplasm. Its function is as follows. Participates in both transcription termination and antitermination. The sequence is that of Transcription termination/antitermination protein NusA from Mycoplasma genitalium (strain ATCC 33530 / DSM 19775 / NCTC 10195 / G37) (Mycoplasmoides genitalium).